The primary structure comprises 169 residues: Probable phospholipid hydroperoxide glutathione peroxidase (169 aa).

C43 is an active-site residue.

This sequence belongs to the glutathione peroxidase family.

The protein resides in the cytoplasm. It carries out the reaction a hydroperoxy polyunsaturated fatty acid + 2 glutathione = a hydroxy polyunsaturated fatty acid + glutathione disulfide + H2O. Protects cells and enzymes from oxidative damage, by catalyzing the reduction of hydrogen peroxide, lipid peroxides and organic hydroperoxide, by glutathione. This Nicotiana tabacum (Common tobacco) protein is Probable phospholipid hydroperoxide glutathione peroxidase.